The sequence spans 139 residues: Lamprin 0.9 (139 aa).

Residues 1-19 (MAAAIQALLVLALLHLATA) form the signal peptide. 8 repeat units span residues 42–46 (GGLGY), 47–51 (GGLGY), 52–56 (GGLGV), 57–61 (AGLGV), 62–66 (AGLGY), 67–71 (GGLGY), 92–96 (GGLGY), and 106–110 (GGLGY). Residues 42–110 (GGLGYGGLGY…YHHALGGLGY (69 aa)) are 8 X 5 AA approximate repeats.

As to quaternary structure, the polymeric lamprin chains self-aggregate to form fibers and have secondary structures particularly rich in beta-sheets and in beta-turns.

The protein resides in the secreted. The protein localises to the extracellular space. Its subcellular location is the extracellular matrix. Its function is as follows. Self-aggregating protein that is part of the soluble form of lamprin. This Petromyzon marinus (Sea lamprey) protein is Lamprin 0.9.